The chain runs to 111 residues: Toxin 3FTx-Tri2 (111 aa).

The N-terminal stretch at methionine 1–alanine 19 is a signal peptide. Positions aspartate 20 to arginine 34 are excised as a propeptide. Glutamine 35 carries the pyrrolidone carboxylic acid modification. Intrachain disulfides connect cysteine 44/cysteine 68, cysteine 47/cysteine 55, cysteine 61/cysteine 87, cysteine 91/cysteine 102, and cysteine 103/cysteine 108.

The protein belongs to the three-finger toxin family. Ancestral subfamily. Boigatoxin sub-subfamily. In terms of tissue distribution, expressed by the venom gland.

It is found in the secreted. Its function is as follows. Potent postsynaptic neurotoxin. Displays readily reversible competitive antagonism at the nicotinic acetylcholine receptor (nAChR). In Trimorphodon biscutatus (Western lyre snake), this protein is Toxin 3FTx-Tri2.